Reading from the N-terminus, the 158-residue chain is NAD(P)H-quinone oxidoreductase subunit J, chloroplastic (158 aa).

It belongs to the complex I 30 kDa subunit family. As to quaternary structure, NDH is composed of at least 16 different subunits, 5 of which are encoded in the nucleus.

The protein resides in the plastid. Its subcellular location is the chloroplast thylakoid membrane. The catalysed reaction is a plastoquinone + NADH + (n+1) H(+)(in) = a plastoquinol + NAD(+) + n H(+)(out). The enzyme catalyses a plastoquinone + NADPH + (n+1) H(+)(in) = a plastoquinol + NADP(+) + n H(+)(out). Its function is as follows. NDH shuttles electrons from NAD(P)H:plastoquinone, via FMN and iron-sulfur (Fe-S) centers, to quinones in the photosynthetic chain and possibly in a chloroplast respiratory chain. The immediate electron acceptor for the enzyme in this species is believed to be plastoquinone. Couples the redox reaction to proton translocation, and thus conserves the redox energy in a proton gradient. The protein is NAD(P)H-quinone oxidoreductase subunit J, chloroplastic of Cryptomeria japonica (Japanese cedar).